Consider the following 2287-residue polypeptide: Protein Ycf2 (2287 aa).

1632–1639 (GSIGTGRS) serves as a coordination point for ATP.

It belongs to the Ycf2 family.

Its subcellular location is the plastid. The protein localises to the chloroplast stroma. In terms of biological role, probable ATPase of unknown function. Its presence in a non-photosynthetic plant (Epifagus virginiana) and experiments in tobacco indicate that it has an essential function which is probably not related to photosynthesis. The chain is Protein Ycf2 from Calycanthus floridus var. glaucus (Eastern sweetshrub).